Reading from the N-terminus, the 322-residue chain is Phosphatidylserine decarboxylase proenzyme (322 aa).

Catalysis depends on charge relay system; for autoendoproteolytic cleavage activity residues aspartate 90, histidine 147, and serine 254. The active-site Schiff-base intermediate with substrate; via pyruvic acid; for decarboxylase activity is the serine 254. A Pyruvic acid (Ser); by autocatalysis modification is found at serine 254. Residues 295-322 (VEPAPLPTEEIKAEHDASPLVDNKKDDT) form a disordered region. Basic and acidic residues predominate over residues 303–322 (EEIKAEHDASPLVDNKKDDT).

It belongs to the phosphatidylserine decarboxylase family. PSD-B subfamily. Prokaryotic type I sub-subfamily. In terms of assembly, heterodimer of a large membrane-associated beta subunit and a small pyruvoyl-containing alpha subunit. Requires pyruvate as cofactor. In terms of processing, is synthesized initially as an inactive proenzyme. Formation of the active enzyme involves a self-maturation process in which the active site pyruvoyl group is generated from an internal serine residue via an autocatalytic post-translational modification. Two non-identical subunits are generated from the proenzyme in this reaction, and the pyruvate is formed at the N-terminus of the alpha chain, which is derived from the carboxyl end of the proenzyme. The autoendoproteolytic cleavage occurs by a canonical serine protease mechanism, in which the side chain hydroxyl group of the serine supplies its oxygen atom to form the C-terminus of the beta chain, while the remainder of the serine residue undergoes an oxidative deamination to produce ammonia and the pyruvoyl prosthetic group on the alpha chain. During this reaction, the Ser that is part of the protease active site of the proenzyme becomes the pyruvoyl prosthetic group, which constitutes an essential element of the active site of the mature decarboxylase.

The protein resides in the cell membrane. It carries out the reaction a 1,2-diacyl-sn-glycero-3-phospho-L-serine + H(+) = a 1,2-diacyl-sn-glycero-3-phosphoethanolamine + CO2. The protein operates within phospholipid metabolism; phosphatidylethanolamine biosynthesis; phosphatidylethanolamine from CDP-diacylglycerol: step 2/2. In terms of biological role, catalyzes the formation of phosphatidylethanolamine (PtdEtn) from phosphatidylserine (PtdSer). The protein is Phosphatidylserine decarboxylase proenzyme of Salmonella agona (strain SL483).